Here is a 189-residue protein sequence, read N- to C-terminus: Prophage DNA-packing protein NohA (189 aa).

Belongs to the terminase small subunit family.

The sequence is that of Prophage DNA-packing protein NohA (nohA) from Escherichia coli (strain K12).